The following is a 374-amino-acid chain: Chaperone protein DnaJ (374 aa).

Residues 4–68 (DYYDILGVSR…QMRGRYDQFG (65 aa)) enclose the J domain. A CR-type zinc finger spans residues 133–215 (GGEQQIRISH…CGGRGQNQVS (83 aa)). Residues cysteine 146, cysteine 149, cysteine 163, cysteine 166, cysteine 189, cysteine 192, cysteine 203, and cysteine 206 each coordinate Zn(2+). CXXCXGXG motif repeat units follow at residues 146 to 153 (CKTCEGTG), 163 to 170 (CSTCQGSG), 189 to 196 (CPTCNGQG), and 203 to 210 (CDSCGGRG).

This sequence belongs to the DnaJ family. In terms of assembly, homodimer. Zn(2+) serves as cofactor.

Its subcellular location is the cytoplasm. Its function is as follows. Participates actively in the response to hyperosmotic and heat shock by preventing the aggregation of stress-denatured proteins and by disaggregating proteins, also in an autonomous, DnaK-independent fashion. Unfolded proteins bind initially to DnaJ; upon interaction with the DnaJ-bound protein, DnaK hydrolyzes its bound ATP, resulting in the formation of a stable complex. GrpE releases ADP from DnaK; ATP binding to DnaK triggers the release of the substrate protein, thus completing the reaction cycle. Several rounds of ATP-dependent interactions between DnaJ, DnaK and GrpE are required for fully efficient folding. Also involved, together with DnaK and GrpE, in the DNA replication of plasmids through activation of initiation proteins. This is Chaperone protein DnaJ from Acaryochloris marina (strain MBIC 11017).